The following is a 554-amino-acid chain: Eukaryotic translation initiation factor 3 subunit D-2 (554 aa).

Positions 291 to 305 (QFDLLTVNETALEPP) are RNA gate. Residues 530 to 554 (NAFDSDGNEDEETSEDRPFLKSMAN) are disordered.

It belongs to the eIF-3 subunit D family. In terms of assembly, component of the eukaryotic translation initiation factor 3 (eIF-3) complex. The eIF-3 complex interacts with pix.

It localises to the cytoplasm. In terms of biological role, mRNA cap-binding component of the eukaryotic translation initiation factor 3 (eIF-3) complex, which is involved in protein synthesis of a specialized repertoire of mRNAs and, together with other initiation factors, stimulates binding of mRNA and methionyl-tRNAi to the 40S ribosome. The eIF-3 complex specifically targets and initiates translation of a subset of mRNAs involved in cell proliferation. In the eIF-3 complex, eif3d specifically recognizes and binds the 7-methylguanosine cap of a subset of mRNAs. The protein is Eukaryotic translation initiation factor 3 subunit D-2 of Drosophila mojavensis (Fruit fly).